The chain runs to 629 residues: Glycerol-3-phosphate dehydrogenase SDP6, mitochondrial (629 aa).

The N-terminal 48 residues, 1-48 (MSLASIRRLAAGAAVIAAASGGAVYLSPSVASSDKGGGPILDSLRRRL), are a transit peptide targeting the mitochondrion. Residue 75-103 (DVLVIGGGATGSGVALDAVTRGLRVGLVE) coordinates FAD.

It belongs to the FAD-dependent glycerol-3-phosphate dehydrogenase family. It depends on FAD as a cofactor. Expressed in germinating seedlings. Also detected in roots, leaves, flowers, developing siliques and germinating seeds.

The protein resides in the mitochondrion inner membrane. It catalyses the reaction a quinone + sn-glycerol 3-phosphate = dihydroxyacetone phosphate + a quinol. Its pathway is polyol metabolism; glycerol degradation via glycerol kinase pathway; glycerone phosphate from sn-glycerol 3-phosphate (anaerobic route): step 1/1. Required for glycerol catabolism and involved in NADH/NAD(+) homeostasis. Essential for postgerminative growth and seedling establishment. The polypeptide is Glycerol-3-phosphate dehydrogenase SDP6, mitochondrial (Arabidopsis thaliana (Mouse-ear cress)).